Consider the following 255-residue polypeptide: Indole-3-glycerol phosphate synthase (255 aa).

It belongs to the TrpC family.

The catalysed reaction is 1-(2-carboxyphenylamino)-1-deoxy-D-ribulose 5-phosphate + H(+) = (1S,2R)-1-C-(indol-3-yl)glycerol 3-phosphate + CO2 + H2O. It functions in the pathway amino-acid biosynthesis; L-tryptophan biosynthesis; L-tryptophan from chorismate: step 4/5. In Streptococcus gordonii (strain Challis / ATCC 35105 / BCRC 15272 / CH1 / DL1 / V288), this protein is Indole-3-glycerol phosphate synthase.